Reading from the N-terminus, the 361-residue chain is Phosphoserine aminotransferase (361 aa).

Arginine 42 contributes to the L-glutamate binding site. Residues glycine 76 to arginine 77, tryptophan 102, threonine 154, aspartate 173, and glutamine 196 contribute to the pyridoxal 5'-phosphate site. Lysine 197 bears the N6-(pyridoxal phosphate)lysine mark. Residue asparagine 238–threonine 239 coordinates pyridoxal 5'-phosphate.

The protein belongs to the class-V pyridoxal-phosphate-dependent aminotransferase family. SerC subfamily. As to quaternary structure, homodimer. The cofactor is pyridoxal 5'-phosphate.

It is found in the cytoplasm. The enzyme catalyses O-phospho-L-serine + 2-oxoglutarate = 3-phosphooxypyruvate + L-glutamate. It carries out the reaction 4-(phosphooxy)-L-threonine + 2-oxoglutarate = (R)-3-hydroxy-2-oxo-4-phosphooxybutanoate + L-glutamate. The protein operates within amino-acid biosynthesis; L-serine biosynthesis; L-serine from 3-phospho-D-glycerate: step 2/3. Its pathway is cofactor biosynthesis; pyridoxine 5'-phosphate biosynthesis; pyridoxine 5'-phosphate from D-erythrose 4-phosphate: step 3/5. Catalyzes the reversible conversion of 3-phosphohydroxypyruvate to phosphoserine and of 3-hydroxy-2-oxo-4-phosphonooxybutanoate to phosphohydroxythreonine. The polypeptide is Phosphoserine aminotransferase (Idiomarina loihiensis (strain ATCC BAA-735 / DSM 15497 / L2-TR)).